We begin with the raw amino-acid sequence, 516 residues long: Nucleolar complex protein 4 homolog (516 aa).

3 consecutive transmembrane segments (helical) span residues 297–317 (ACDL…ILIH), 347–367 (FFHL…LVAA), and 375–395 (LALT…CNLL).

It belongs to the CBF/MAK21 family.

It is found in the nucleus membrane. Its subcellular location is the nucleus. It localises to the nucleolus. The polypeptide is Nucleolar complex protein 4 homolog (NOC4L) (Homo sapiens (Human)).